A 186-amino-acid chain; its full sequence is Ribosome-recycling factor (186 aa).

The protein belongs to the RRF family.

It is found in the cytoplasm. Responsible for the release of ribosomes from messenger RNA at the termination of protein biosynthesis. May increase the efficiency of translation by recycling ribosomes from one round of translation to another. This chain is Ribosome-recycling factor, found in Chlorobium phaeovibrioides (strain DSM 265 / 1930) (Prosthecochloris vibrioformis (strain DSM 265)).